The primary structure comprises 613 residues: Potassium voltage-gated channel subfamily A member 5 (613 aa).

The disordered stretch occupies residues 1–108 (MEIALVPLEN…EGDPGLGTVE (108 aa)). Positions 1–211 (MEIALVPLEN…FYQLGDEAME (211 aa)) are tetramerization domain. At 1–247 (MEIALVPLEN…LIFEYPESSG (247 aa)) the chain is on the cytoplasmic side. Residues 45 to 62 (GPKEPAPKGRGAQRDADS) show a composition bias toward basic and acidic residues. 2 consecutive repeat copies span residues 61 to 71 (DSGVRPLPPLP) and 72 to 82 (DPGVRPLPPLP). Residues 61 to 82 (DSGVRPLPPLPDPGVRPLPPLP) are 2 X 11 AA tandem repeat of D-[SP]-G-V-R-P-L-P-P-L-P. Positions 66 to 83 (PLPPLPDPGVRPLPPLPE) are enriched in pro residues. The span at 84-93 (ELPRPRRPPP) shows a compositional bias: basic and acidic residues. Residue Lys-221 forms a Glycyl lysine isopeptide (Lys-Gly) (interchain with G-Cter in SUMO) linkage. Residues 248–269 (SARAIAIVSVLVILISIITFCL) traverse the membrane as a helical segment. The Extracellular portion of the chain corresponds to 270–323 (ETLPEFRDERELLRHPPAPHQPPAPAPGANGSGVMAPPSGPTVAPLLPRTLADP). The interval 282–304 (LRHPPAPHQPPAPAPGANGSGVM) is disordered. The span at 285-295 (PPAPHQPPAPA) shows a compositional bias: pro residues. The helical transmembrane segment at 324-345 (FFIVETTCVIWFTFELLVRFFA) threads the bilayer. Cys-346 is lipidated: S-palmitoyl cysteine. Over 346–356 (CPSKAGFSRNI) the chain is Cytoplasmic. The helical transmembrane segment at 357-377 (MNIIDVVAIFPYFITLGTELA) threads the bilayer. Residues 378–395 (EQQPGGGGGGQNGQQAMS) are Extracellular-facing. Residues 396–416 (LAILRVIRLVRVFRIFKLSRH) form a helical; Voltage-sensor membrane-spanning segment. Residues 417–431 (SKGLQILGKTLQASM) are Cytoplasmic-facing. An S4-S5 linker region spans residues 418–431 (KGLQILGKTLQASM). A helical membrane pass occupies residues 432–453 (RELGLLIFFLFIGVILFSSAVY). At 454-467 (FAEADNQGTHFSSI) the chain is on the extracellular side. The helical intramembrane region spans 468–479 (PDAFWWAVVTMT). Residues 480–485 (TVGYGD) carry the Selectivity filter motif. The stretch at 480-487 (TVGYGDMR) is an intramembrane region. Residues 488-494 (PITVGGK) lie on the Extracellular side of the membrane. Residues 495–523 (IVGSLCAIAGVLTIALPVPVIVSNFNYFY) form a helical membrane-spanning segment. Over 524–613 (HRETDHEEPA…CLDTSRETDL (90 aa)) the chain is Cytoplasmic. A disordered region spans residues 532 to 559 (PAVLKEEQGTQSQGPGLDRGVQRKVSGS). A Glycyl lysine isopeptide (Lys-Gly) (interchain with G-Cter in SUMO) cross-link involves residue Lys-536. Phosphoserine; by PKA is present on Ser-557. The short motif at 611–613 (TDL) is the PDZ-binding element.

Belongs to the potassium channel family. A (Shaker) (TC 1.A.1.2) subfamily. Kv1.5/KCNA5 sub-subfamily. As to quaternary structure, homotetramer and heterotetramer of potassium channel proteins. Interacts with DLG1, which enhances channel currents. Forms a ternary complex with DLG1 and CAV3. Interacts with KCNAB1. Interacts with UBE2I. Interacts with XIRP2; the interaction is required for normal action potential configuration in the heart. Glycosylated. Post-translationally, sumoylated on Lys-221, and Lys-536, preferentially with SUMO3. Sumoylation regulates the voltage sensitivity of the channel. Pancreatic islets and insulinoma.

The protein resides in the cell membrane. The catalysed reaction is K(+)(in) = K(+)(out). Inhibited by 4-aminopyridine, nicotine, bepridil, correolide, and endothelin-1. Its function is as follows. Voltage-gated potassium channel that mediates transmembrane potassium transport in excitable membranes. Forms tetrameric potassium-selective channels through which potassium ions pass in accordance with their electrochemical gradient. The channel alternates between opened and closed conformations in response to the voltage difference across the membrane. Can form functional homotetrameric channels and heterotetrameric channels that contain variable proportions of KCNA1, KCNA2, KCNA4, KCNA5, and possibly other family members as well; channel properties depend on the type of alpha subunits that are part of the channel. Channel properties are modulated by cytoplasmic beta subunits that regulate the subcellular location of the alpha subunits and promote rapid inactivation. Homotetrameric channels display rapid activation and slow inactivation. Required for normal electrical conduction including formation of the infranodal ventricular conduction system and normal action potential configuration, as a result of its interaction with XIRP2. May play a role in regulating the secretion of insulin in normal pancreatic islets. Functionally, exhibits a faster depolarization rate, reduced voltage-dependent recovery from inactivation and an excessive cumulative inactivation. This chain is Potassium voltage-gated channel subfamily A member 5 (KCNA5), found in Homo sapiens (Human).